The sequence spans 215 residues: Probable nicotinate-nucleotide adenylyltransferase (215 aa).

This sequence belongs to the NadD family.

It carries out the reaction nicotinate beta-D-ribonucleotide + ATP + H(+) = deamido-NAD(+) + diphosphate. It participates in cofactor biosynthesis; NAD(+) biosynthesis; deamido-NAD(+) from nicotinate D-ribonucleotide: step 1/1. In terms of biological role, catalyzes the reversible adenylation of nicotinate mononucleotide (NaMN) to nicotinic acid adenine dinucleotide (NaAD). This is Probable nicotinate-nucleotide adenylyltransferase from Coxiella burnetii (strain Dugway 5J108-111).